Reading from the N-terminus, the 356-residue chain is MTRLRKIIHVDMDAFYASVEQRDDPSLRGKPVVVAWRGARSVVCAASYEARVFGVRSAMPAVRAERLCPDAIFVPPDFARYKAVSQQVREIFLRHTDLVEPLSLDEAYLDVTEPKSGMELATDIARTIRAQIREETQLTASAGIAPNKFLAKIASDWRKPDGQFVIPPQRVDAFLLPLPVNRVPGVGKVMEGKLAARGIVTCGDLRQWALIDLEEAFGSFGRSLYNRARGVDERPVEPDQQVQSISSEDTFAEDLPLEDLGEAIVQLAEKTWNATRKTERVGHTVVLKLKTAQFRILTRSFTPERPPESMEELRDIALALRARVDLPADTRYRLVGVGLSGFRDKEPVVQGELFEH.

Residues 7 to 187 form the UmuC domain; that stretch reads IIHVDMDAFY…LPVNRVPGVG (181 aa). Mg(2+) is bound by residues Asp11 and Asp105. The active site involves Glu106.

Belongs to the DNA polymerase type-Y family. In terms of assembly, monomer. The cofactor is Mg(2+).

The protein resides in the cytoplasm. It carries out the reaction DNA(n) + a 2'-deoxyribonucleoside 5'-triphosphate = DNA(n+1) + diphosphate. Functionally, poorly processive, error-prone DNA polymerase involved in untargeted mutagenesis. Copies undamaged DNA at stalled replication forks, which arise in vivo from mismatched or misaligned primer ends. These misaligned primers can be extended by PolIV. Exhibits no 3'-5' exonuclease (proofreading) activity. May be involved in translesional synthesis, in conjunction with the beta clamp from PolIII. This Stenotrophomonas maltophilia (strain R551-3) protein is DNA polymerase IV.